Reading from the N-terminus, the 577-residue chain is Serine/threonine-protein kinase AGC1-5 (577 aa).

The segment covering 1–12 (MDLASKKNTANV) has biased composition (polar residues). The tract at residues 1-151 (MDLASKKNTA…DYAYGDNLVG (151 aa)) is disordered. A compositionally biased stretch (basic and acidic residues) spans 44-55 (PHFDPKKMDPLV). 2 stretches are compositionally biased toward polar residues: residues 69–87 (TRGT…SSDG) and 110–120 (LTTSETYSPSA). One can recognise a Protein kinase domain in the interval 185–509 (FRLLKRLGYG…ATEIKQHPFF (325 aa)). Residues 191 to 199 (LGYGDIGSV) and K214 each bind ATP. Catalysis depends on D310, which acts as the Proton acceptor. The 68-residue stretch at 510–577 (EGVNWALVRS…DTAYIDFEYF (68 aa)) folds into the AGC-kinase C-terminal domain.

This sequence belongs to the protein kinase superfamily. AGC Ser/Thr protein kinase family. Interacts with PDPK1/PDK1. Autophosphorylated and phosphorylated by PDPK1/PDK1. In terms of tissue distribution, specifically expressed in pollen grains.

It catalyses the reaction L-seryl-[protein] + ATP = O-phospho-L-seryl-[protein] + ADP + H(+). It carries out the reaction L-threonyl-[protein] + ATP = O-phospho-L-threonyl-[protein] + ADP + H(+). Activated by PDPK1/PDK1. Its function is as follows. Functions redudantly with AGC1-7 as signaling component in the pollen tube. Required for polarized growth of pollen tubes. This Arabidopsis thaliana (Mouse-ear cress) protein is Serine/threonine-protein kinase AGC1-5.